We begin with the raw amino-acid sequence, 456 residues long: Glycine--tRNA ligase (456 aa).

Substrate contacts are provided by R98 and E168. ATP contacts are provided by residues 200-202 (RNE), 210-215 (FRTREF), 285-286 (EL), and 329-332 (GVER). 215-219 (FEQME) contacts substrate. Residue 325 to 329 (EPSVG) participates in substrate binding.

Belongs to the class-II aminoacyl-tRNA synthetase family. In terms of assembly, homodimer.

Its subcellular location is the cytoplasm. It catalyses the reaction tRNA(Gly) + glycine + ATP = glycyl-tRNA(Gly) + AMP + diphosphate. Its function is as follows. Catalyzes the attachment of glycine to tRNA(Gly). The sequence is that of Glycine--tRNA ligase from Mycoplasma mycoides subsp. mycoides SC (strain CCUG 32753 / NCTC 10114 / PG1).